The primary structure comprises 259 residues: Putative zinc metalloprotease Rip2 (259 aa).

The next 2 membrane-spanning stretches (helical) occupy residues 14-34 and 39-59; these read PIFLGLLGLTAVGGALAWLAG and PLAYAGVFVMVIAGWLVSLCL. Position 60 (H60) interacts with Zn(2+). Residue E61 is part of the active site. H64 lines the Zn(2+) pocket. 4 helical membrane passes run 97–117, 128–148, 156–176, and 215–235; these read GLPMLFIALGGIGLPGAAVYV, TLVSLAGPTVNLALAMLLLAA, IHAVLWAGVAFLAFLQLTALV, and LVLFLAPTLNGWFFGVVYWLF.

It belongs to the peptidase M50B family. It depends on Zn(2+) as a cofactor.

The protein localises to the cell membrane. This chain is Putative zinc metalloprotease Rip2 (rip2), found in Mycobacterium tuberculosis (strain ATCC 35801 / TMC 107 / Erdman).